A 153-amino-acid polypeptide reads, in one-letter code: Protein ripply2.2 (153 aa).

Residues 58-61 (WRPW) carry the WRPW motif; required for transcriptional repression and interaction with tle4 motif. The ripply homology domain stretch occupies residues 93–128 (HPVRLFWPKSKLLDNTYQEAADLLRNFPVQATISLY). The disordered stretch occupies residues 127–153 (LYNDSESDTDNEEDSSEEEQDSGFESE). Acidic residues predominate over residues 131 to 153 (SESDTDNEEDSSEEEQDSGFESE).

The protein belongs to the ripply family. Interacts with tle4 and tbx6, and mediates interaction between these proteins. Expressed in the presomitic mesoderm (PSM) in the anterior halves of somitomeres S-I, S-II and S-III.

The protein localises to the nucleus. Required during somitogenesis for the formation of somite boundaries. Represses the expression of genes involved in somite segmentation by acting with the corepressor tle4 to down-regulate the transcriptional activity of tbx6. May act by regulating the activity of tle4. Represses transcription of delta2, thy1 and ripply2.2/bowline itself. The protein is Protein ripply2.2 (ripply2.2) of Xenopus laevis (African clawed frog).